The following is a 450-amino-acid chain: tRNA-2-methylthio-N(6)-dimethylallyladenosine synthase (450 aa).

The region spanning 14–132 (GEFFIETWGC…FPNYLNEVKK (119 aa)) is the MTTase N-terminal domain. [4Fe-4S] cluster contacts are provided by C23, C59, C93, C169, C173, and C176. Residues 155-385 (RKNSMKAFVT…VEVVNEISAK (231 aa)) enclose the Radical SAM core domain. The 63-residue stretch at 388 to 450 (KAYEGKIEEV…NSFSLTGEEI (63 aa)) folds into the TRAM domain.

This sequence belongs to the methylthiotransferase family. MiaB subfamily. In terms of assembly, monomer. [4Fe-4S] cluster is required as a cofactor.

It localises to the cytoplasm. The catalysed reaction is N(6)-dimethylallyladenosine(37) in tRNA + (sulfur carrier)-SH + AH2 + 2 S-adenosyl-L-methionine = 2-methylsulfanyl-N(6)-dimethylallyladenosine(37) in tRNA + (sulfur carrier)-H + 5'-deoxyadenosine + L-methionine + A + S-adenosyl-L-homocysteine + 2 H(+). Catalyzes the methylthiolation of N6-(dimethylallyl)adenosine (i(6)A), leading to the formation of 2-methylthio-N6-(dimethylallyl)adenosine (ms(2)i(6)A) at position 37 in tRNAs that read codons beginning with uridine. This is tRNA-2-methylthio-N(6)-dimethylallyladenosine synthase from Clostridium botulinum (strain Langeland / NCTC 10281 / Type F).